The sequence spans 395 residues: 1-deoxy-D-xylulose 5-phosphate reductoisomerase (395 aa).

7 residues coordinate NADPH: threonine 10, glycine 11, serine 12, isoleucine 13, arginine 37, glutamine 38, and asparagine 124. Residue lysine 125 participates in 1-deoxy-D-xylulose 5-phosphate binding. Glutamate 126 lines the NADPH pocket. Aspartate 150 contributes to the Mn(2+) binding site. Positions 151, 152, 179, and 202 each coordinate 1-deoxy-D-xylulose 5-phosphate. Glutamate 152 is a binding site for Mn(2+). Residue glycine 208 participates in NADPH binding. Residues serine 215, asparagine 220, lysine 221, and glutamate 224 each coordinate 1-deoxy-D-xylulose 5-phosphate. Residue glutamate 224 participates in Mn(2+) binding.

This sequence belongs to the DXR family. The cofactor is Mg(2+). Requires Mn(2+) as cofactor.

It catalyses the reaction 2-C-methyl-D-erythritol 4-phosphate + NADP(+) = 1-deoxy-D-xylulose 5-phosphate + NADPH + H(+). It participates in isoprenoid biosynthesis; isopentenyl diphosphate biosynthesis via DXP pathway; isopentenyl diphosphate from 1-deoxy-D-xylulose 5-phosphate: step 1/6. In terms of biological role, catalyzes the NADPH-dependent rearrangement and reduction of 1-deoxy-D-xylulose-5-phosphate (DXP) to 2-C-methyl-D-erythritol 4-phosphate (MEP). The chain is 1-deoxy-D-xylulose 5-phosphate reductoisomerase from Cupriavidus pinatubonensis (strain JMP 134 / LMG 1197) (Cupriavidus necator (strain JMP 134)).